The following is a 449-amino-acid chain: Phosphoglucosamine mutase (449 aa).

Serine 100 functions as the Phosphoserine intermediate in the catalytic mechanism. Residues serine 100, aspartate 241, aspartate 243, and aspartate 245 each contribute to the Mg(2+) site. Serine 100 is subject to Phosphoserine.

This sequence belongs to the phosphohexose mutase family. Mg(2+) serves as cofactor. Post-translationally, activated by phosphorylation.

It carries out the reaction alpha-D-glucosamine 1-phosphate = D-glucosamine 6-phosphate. Functionally, catalyzes the conversion of glucosamine-6-phosphate to glucosamine-1-phosphate. In Clostridium kluyveri (strain NBRC 12016), this protein is Phosphoglucosamine mutase.